We begin with the raw amino-acid sequence, 390 residues long: DNA primase small subunit PriS (390 aa).

Catalysis depends on residues Asp-98, Asp-100, and Asp-296.

Belongs to the eukaryotic-type primase small subunit family. In terms of assembly, heterodimer of a small subunit (PriS) and a large subunit (PriL). It depends on Mg(2+) as a cofactor. Requires Mn(2+) as cofactor.

Catalytic subunit of DNA primase, an RNA polymerase that catalyzes the synthesis of short RNA molecules used as primers for DNA polymerase during DNA replication. The small subunit contains the primase catalytic core and has DNA synthesis activity on its own. Binding to the large subunit stabilizes and modulates the activity, increasing the rate of DNA synthesis while decreasing the length of the DNA fragments, and conferring RNA synthesis capability. The DNA polymerase activity may enable DNA primase to also catalyze primer extension after primer synthesis. May also play a role in DNA repair. This chain is DNA primase small subunit PriS, found in Methanococcoides burtonii (strain DSM 6242 / NBRC 107633 / OCM 468 / ACE-M).